The primary structure comprises 162 residues: Cyclic pyranopterin monophosphate synthase (162 aa).

Substrate-binding positions include 75-77 (LCH) and 113-114 (ME). Residue Asp128 is part of the active site.

The protein belongs to the MoaC family. In terms of assembly, homohexamer; trimer of dimers.

The catalysed reaction is (8S)-3',8-cyclo-7,8-dihydroguanosine 5'-triphosphate = cyclic pyranopterin phosphate + diphosphate. The protein operates within cofactor biosynthesis; molybdopterin biosynthesis. Functionally, catalyzes the conversion of (8S)-3',8-cyclo-7,8-dihydroguanosine 5'-triphosphate to cyclic pyranopterin monophosphate (cPMP). The polypeptide is Cyclic pyranopterin monophosphate synthase (Burkholderia cenocepacia (strain HI2424)).